Reading from the N-terminus, the 943-residue chain is UvrABC system protein A (943 aa).

31–38 (GLSGSGKS) contacts ATP. Residues 253–280 (CPHCGYSVPELEPRLFSFNNPAGACPTC) form a C4-type zinc finger. 2 consecutive ABC transporter domains span residues 310–587 (WDRR…PHSI) and 607–937 (LDKK…RFLK). Residue 640 to 647 (GVSGSGKS) participates in ATP binding. A C4-type zinc finger spans residues 740–766 (CEACQGDGVIKVEMHFLPDVYVPCEQC).

The protein belongs to the ABC transporter superfamily. UvrA family. In terms of assembly, forms a heterotetramer with UvrB during the search for lesions.

The protein localises to the cytoplasm. The UvrABC repair system catalyzes the recognition and processing of DNA lesions. UvrA is an ATPase and a DNA-binding protein. A damage recognition complex composed of 2 UvrA and 2 UvrB subunits scans DNA for abnormalities. When the presence of a lesion has been verified by UvrB, the UvrA molecules dissociate. This chain is UvrABC system protein A, found in Pasteurella multocida (strain Pm70).